A 491-amino-acid polypeptide reads, in one-letter code: Monodehydroascorbate reductase 5, chlorplastic (491 aa).

The N-terminal 42 residues, 1–42 (MASTAAAASSQGCISWALRQRGLGGGGARAVPVLPRRRFCVS), are a transit peptide targeting the chloroplast. FAD contacts are provided by residues 61–64 (GGNA), Glu-88, Arg-95, Lys-100, and 194–195 (RD). NAD(+) contacts are provided by residues 217–223 (GGYIGME), Glu-241, Arg-247, and Gly-306. NADP(+) is bound at residue 219-223 (YIGME). Residues Arg-247 and Gly-306 each contribute to the NADP(+) site. FAD is bound at residue Asp-344. 360 to 361 (EH) lines the NAD(+) pocket. 360-361 (EH) contacts NADP(+). Val-362 is an FAD binding site. Arg-366 is an L-ascorbate binding site. Tyr-391 provides a ligand contact to FAD. Tyr-391 is a binding site for NAD(+). NADP(+) is bound at residue Tyr-391. Position 393 (Arg-393) interacts with L-ascorbate.

This sequence belongs to the FAD-dependent oxidoreductase family. It depends on FAD as a cofactor.

It is found in the plastid. The protein localises to the chloroplast. It carries out the reaction 2 monodehydro-L-ascorbate radical + NADH + H(+) = 2 L-ascorbate + NAD(+). Functionally, catalyzes the conversion of monodehydroascorbate to ascorbate, oxidizing NADH in the process. Ascorbate is a major antioxidant against reactive oxygen species (ROS) and nitric oxide (NO). This Oryza sativa subsp. japonica (Rice) protein is Monodehydroascorbate reductase 5, chlorplastic.